Here is a 351-residue protein sequence, read N- to C-terminus: MGSQSLNSTFLKVRRLSLISSNERLLGQTSGLATGSRLVTQEVDDLRVIPGSRPDLDDHQPQCSLAELPSTAHGKRKPGHLPRLRSSAVKGHAPDPNPSLSIVSKRIFKGESVIKGPEDRQTFVGPSGLPKISPKATAGEAQGKKRTMELLNKARKQEEKVSNLLDIRQLPKQEVFINNTHPCKKHLKQQPMSLEEWRRGHLGGDNTGLISQEPFRCCKRLGKKAQCQLLEVTSLEAEASLEVLKRRRRMQAMEMSKKPQDRGLGQEKAVFLSREKVKPSSHDMHLSTAERSFKPKSMPKAEDWDLSVQGTPVVLTVRDHSNVSQAQKHLGCAEIFHSRDGRCTLLKRGGA.

3 disordered regions span residues Pro-69–Ser-101, Pro-117–Lys-144, and Glu-275–Met-298. Residues His-73–Arg-83 are compositionally biased toward basic residues. Residues Glu-275 to His-285 show a composition bias toward basic and acidic residues.

As to expression, specific to testis, where it is expressed in spermatogonia.

The protein resides in the nucleus. In terms of biological role, nuclear factor which might have a role in spermatogenesis. The sequence is that of Protein Tex24 from Mus musculus (Mouse).